The primary structure comprises 123 residues: UPF0738 protein BCE_1319 (123 aa).

The protein belongs to the UPF0738 family.

In Bacillus cereus (strain ATCC 10987 / NRS 248), this protein is UPF0738 protein BCE_1319.